A 397-amino-acid polypeptide reads, in one-letter code: Decapping and exoribonuclease protein (397 aa).

A compositionally biased stretch (basic and acidic residues) spans 1–20 (MESRGTKREAGKIEVAEPRN). The interval 1-37 (MESRGTKREAGKIEVAEPRNKLPRPAPSLPTDPALYS) is disordered. A substrate-binding site is contributed by Arg58. The segment at 67-88 (LRYYSPPPTNGQSPNFDLRDGY) is disordered. Residues Glu101 and 131-133 (WRG) contribute to the substrate site. Position 192 (Glu192) interacts with Mg(2+). Positions 217 and 234 each coordinate substrate. Positions 234, 236, 253, and 254 each coordinate Mg(2+). 2 residues coordinate substrate: Lys255 and Gln280. Residue Thr392 is modified to Phosphothreonine. Ser394 is subject to Phosphoserine.

The protein belongs to the DXO/Dom3Z family. Requires Mg(2+) as cofactor.

Its subcellular location is the nucleus. It carries out the reaction a 5'-end triphospho-ribonucleoside in mRNA + H2O = a 5'-end phospho-ribonucleoside in mRNA + diphosphate + H(+). The catalysed reaction is a 5'-end NAD(+)-phospho-ribonucleoside in mRNA + H2O = a 5'-end phospho-ribonucleoside in mRNA + NAD(+) + H(+). The enzyme catalyses a 5'-end NAD(+)-phospho-ribonucleoside in snoRNA + H2O = a 5'-end phospho-ribonucleoside in snoRNA + NAD(+) + H(+). It catalyses the reaction a 5'-end (N(7)-methyl 5'-triphosphoguanosine)-ribonucleoside-ribonucleotide in mRNA + H2O = a (N(7)-methyl 5'-triphosphoguanosine)-nucleoside + a 5'-end phospho-ribonucleoside in mRNA + H(+). It carries out the reaction a 5'-end FAD-phospho-ribonucleoside in mRNA + H2O = a 5'-end phospho-ribonucleoside in mRNA + FAD + H(+). The catalysed reaction is a 5'-end CoA-ribonucleoside in mRNA + H2O = 3'-dephospho-CoA + a 5'-end phospho-ribonucleoside in mRNA + H(+). Its function is as follows. Decapping enzyme for NAD-capped RNAs: specifically hydrolyzes the nicotinamide adenine dinucleotide (NAD) cap from a subset of RNAs by removing the entire NAD moiety from the 5'-end of an NAD-capped RNA. The NAD-cap is present at the 5'-end of some RNAs and snoRNAs. In contrast to the canonical 5'-end N7 methylguanosine (m7G) cap, the NAD cap promotes mRNA decay. Preferentially acts on NAD-capped transcripts in response to environmental stress. Also acts as a non-canonical decapping enzyme that removes the entire cap structure of m7G capped or incompletely capped RNAs and mediates their subsequent degradation. Specifically degrades pre-mRNAs with a defective 5'-end m7G cap and is part of a pre-mRNA capping quality control. Has decapping activity toward incomplete 5'-end m7G cap mRNAs such as unmethylated 5'-end-capped RNA (cap0), while it has no activity toward 2'-O-ribose methylated m7G cap (cap1). In contrast to canonical decapping enzymes DCP2 and NUDT16, which cleave the cap within the triphosphate linkage, the decapping activity releases the entire cap structure GpppN and a 5'-end monophosphate RNA. Also has 5'-3' exoribonuclease activities: The 5'-end monophosphate RNA is then degraded by the 5'-3' exoribonuclease activity, enabling this enzyme to decap and degrade incompletely capped mRNAs. Also possesses RNA 5'-pyrophosphohydrolase activity by hydrolyzing the 5'-end triphosphate to release pyrophosphates. Exhibits decapping activity towards FAD-capped RNAs. Exhibits decapping activity towards dpCoA-capped RNAs in vitro. The polypeptide is Decapping and exoribonuclease protein (Bos taurus (Bovine)).